The chain runs to 86 residues: UPF0335 protein mll3968 (86 aa).

It belongs to the UPF0335 family.

This chain is UPF0335 protein mll3968, found in Mesorhizobium japonicum (strain LMG 29417 / CECT 9101 / MAFF 303099) (Mesorhizobium loti (strain MAFF 303099)).